Reading from the N-terminus, the 479-residue chain is Glycogen synthase (479 aa).

Residue K15 coordinates ADP-alpha-D-glucose.

It belongs to the glycosyltransferase 1 family. Bacterial/plant glycogen synthase subfamily.

The enzyme catalyses [(1-&gt;4)-alpha-D-glucosyl](n) + ADP-alpha-D-glucose = [(1-&gt;4)-alpha-D-glucosyl](n+1) + ADP + H(+). Its pathway is glycan biosynthesis; glycogen biosynthesis. Synthesizes alpha-1,4-glucan chains using ADP-glucose. The protein is Glycogen synthase of Acidiphilium cryptum (strain JF-5).